The chain runs to 169 residues: Cell division inhibitor SulA (169 aa).

Positions 106-112 are ftsZ binding; that stretch reads ALRTGNY. The segment at 162–169 is lon protease binding; it reads KIHSNLYH.

This sequence belongs to the SulA family. As to quaternary structure, interacts with FtsZ. Is rapidly cleaved and degraded by the Lon protease once DNA damage is repaired.

Its function is as follows. Component of the SOS system and an inhibitor of cell division. Accumulation of SulA causes rapid cessation of cell division and the appearance of long, non-septate filaments. In the presence of GTP, binds a polymerization-competent form of FtsZ in a 1:1 ratio, thus inhibiting FtsZ polymerization and therefore preventing it from participating in the assembly of the Z ring. This mechanism prevents the premature segregation of damaged DNA to daughter cells during cell division. In Escherichia fergusonii (strain ATCC 35469 / DSM 13698 / CCUG 18766 / IAM 14443 / JCM 21226 / LMG 7866 / NBRC 102419 / NCTC 12128 / CDC 0568-73), this protein is Cell division inhibitor SulA.